Here is a 514-residue protein sequence, read N- to C-terminus: Ferrochelatase-2, chloroplastic (514 aa).

Belongs to the ferrochelatase family.

The protein resides in the plastid. Its subcellular location is the chloroplast. The catalysed reaction is heme b + 2 H(+) = protoporphyrin IX + Fe(2+). The protein operates within porphyrin-containing compound metabolism; protoheme biosynthesis; protoheme from protoporphyrin-IX: step 1/1. Functionally, catalyzes the ferrous insertion into protoporphyrin IX. This is Ferrochelatase-2, chloroplastic (HEMH) from Cucumis sativus (Cucumber).